The following is a 214-amino-acid chain: Pyridoxine/pyridoxamine 5'-phosphate oxidase (214 aa).

Substrate contacts are provided by residues 9–12 (RREY) and K67. Residues 62–67 (RTVLLK), 77–78 (YS), R83, K84, and Q106 contribute to the FMN site. Substrate is bound by residues Y124, R128, and S132. FMN is bound by residues 141–142 (QS) and W186. 192-194 (RLH) lines the substrate pocket. FMN is bound at residue R196.

It belongs to the pyridoxamine 5'-phosphate oxidase family. In terms of assembly, homodimer. It depends on FMN as a cofactor.

It carries out the reaction pyridoxamine 5'-phosphate + O2 + H2O = pyridoxal 5'-phosphate + H2O2 + NH4(+). It catalyses the reaction pyridoxine 5'-phosphate + O2 = pyridoxal 5'-phosphate + H2O2. It functions in the pathway cofactor metabolism; pyridoxal 5'-phosphate salvage; pyridoxal 5'-phosphate from pyridoxamine 5'-phosphate: step 1/1. It participates in cofactor metabolism; pyridoxal 5'-phosphate salvage; pyridoxal 5'-phosphate from pyridoxine 5'-phosphate: step 1/1. Its function is as follows. Catalyzes the oxidation of either pyridoxine 5'-phosphate (PNP) or pyridoxamine 5'-phosphate (PMP) into pyridoxal 5'-phosphate (PLP). The sequence is that of Pyridoxine/pyridoxamine 5'-phosphate oxidase from Porphyromonas gingivalis (strain ATCC BAA-308 / W83).